We begin with the raw amino-acid sequence, 84 residues long: Large ribosomal subunit protein bL27 (84 aa).

The segment at 1 to 25 (MAHKKAGGSSKNGRDSAGKRLGVKR) is disordered.

It belongs to the bacterial ribosomal protein bL27 family.

This Syntrophotalea carbinolica (strain DSM 2380 / NBRC 103641 / GraBd1) (Pelobacter carbinolicus) protein is Large ribosomal subunit protein bL27.